The chain runs to 287 residues: Nucleotide-binding protein TGRD_433 (287 aa).

Position 9-16 (9-16 (GMSGAGKS)) interacts with ATP. 60-63 (DSRA) serves as a coordination point for GTP.

It belongs to the RapZ-like family.

Its function is as follows. Displays ATPase and GTPase activities. This chain is Nucleotide-binding protein TGRD_433, found in Endomicrobium trichonymphae.